Reading from the N-terminus, the 94-residue chain is Co-chaperonin GroES (94 aa).

Belongs to the GroES chaperonin family. Heptamer of 7 subunits arranged in a ring. Interacts with the chaperonin GroEL.

It is found in the cytoplasm. Its function is as follows. Together with the chaperonin GroEL, plays an essential role in assisting protein folding. The GroEL-GroES system forms a nano-cage that allows encapsulation of the non-native substrate proteins and provides a physical environment optimized to promote and accelerate protein folding. GroES binds to the apical surface of the GroEL ring, thereby capping the opening of the GroEL channel. In Geobacillus stearothermophilus (Bacillus stearothermophilus), this protein is Co-chaperonin GroES.